Reading from the N-terminus, the 974-residue chain is Membrane-associated phosphatidylinositol transfer protein 3 (974 aa).

Phosphoserine is present on residues S30, S31, S109, S295, S298, S321, S343, and S495. The segment at 310–347 (CSLASSKRLSKSNVDVSSGVEDEDPKRPLPRKQSDSST) is disordered. Residues 312–325 (LASSKRLSKSNVDV) show a composition bias toward polar residues. Positions 390–594 (FDFDVSDFFL…VAFILRQVMR (205 aa)) constitute a DDHD domain. Positions 497 to 535 (PLLDAPASPPQAPRFQRTERRLSKGSSHSDSSESSDSLA) are disordered. Positions 520–533 (KGSSHSDSSESSDS) are enriched in low complexity. Phosphoserine is present on residues S612, S907, S928, and S946. The segment at 927 to 974 (MSVQQPDPPAANPKPERAQSQPESDKDHERPLPALSWARGPPKFESVP) is disordered.

It belongs to the PtdIns transfer protein family. PI transfer class IIA subfamily. In terms of assembly, interacts with PTK2B via its C-terminus.

The protein localises to the endomembrane system. In terms of biological role, catalyzes the transfer of phosphatidylinositol and phosphatidylcholine between membranes (in vitro). Binds calcium ions. This Mus musculus (Mouse) protein is Membrane-associated phosphatidylinositol transfer protein 3 (Pitpnm3).